We begin with the raw amino-acid sequence, 96 residues long: CNQSTLQMLLEIFVWIGYVSSGVNPLVYTLFNKTFRDAFGRYITCNYKATKSVKTVRKCSNKIYFRNPMTENSKFFMKHGMRNGINSTMYQSPVRL.

Residues 1–8 (CNQSTLQM) are Extracellular-facing. Asn-2 is a glycosylation site (N-linked (GlcNAc...) asparagine). The helical transmembrane segment at 9 to 30 (LLEIFVWIGYVSSGVNPLVYTL) threads the bilayer. Residues 24 to 28 (NPLVY) carry the NPxxY motif; important for ligand-induced conformation changes and signaling motif. Residues 31–96 (FNKTFRDAFG…STMYQSPVRL (66 aa)) lie on the Cytoplasmic side of the membrane. A lipid anchor (S-palmitoyl cysteine) is attached at Cys-45.

Belongs to the G-protein coupled receptor 1 family. In terms of assembly, interacts (via C-terminus) with MPDZ.

It localises to the cell membrane. Its subcellular location is the synapse. It is found in the synaptosome. Its function is as follows. G-protein coupled receptor for 5-hydroxytryptamine (serotonin). Also functions as a receptor for various ergot alkaloid derivatives and psychoactive substances. Ligand binding causes a conformation change that triggers signaling via guanine nucleotide-binding proteins (G proteins) and modulates the activity of downstream effectors. HTR2B is coupled to G(q)/G(11) G alpha proteins and activates phospholipase C-beta, releasing diacylglycerol (DAG) and inositol 1,4,5-trisphosphate (IP3) second messengers that modulate the activity of phosphatidylinositol 3-kinase and promote the release of Ca(2+) ions from intracellular stores, respectively. Beta-arrestin family members inhibit signaling via G proteins and mediate activation of alternative signaling pathways. Plays a role in the regulation of dopamine and 5-hydroxytryptamine release, 5-hydroxytryptamine uptake and in the regulation of extracellular dopamine and 5-hydroxytryptamine levels, and thereby affects neural activity. May play a role in the perception of pain. Plays a role in the regulation of behavior, including impulsive behavior. Required for normal proliferation of embryonic cardiac myocytes and normal heart development. Protects cardiomyocytes against apoptosis. Plays a role in the adaptation of pulmonary arteries to chronic hypoxia. Plays a role in vasoconstriction. Required for normal osteoblast function and proliferation, and for maintaining normal bone density. Required for normal proliferation of the interstitial cells of Cajal in the intestine. This is 5-hydroxytryptamine receptor 2B (HTR2B) from Cavia porcellus (Guinea pig).